The chain runs to 445 residues: Sterile alpha motif domain-containing protein 7 (445 aa).

Residues 98-172 are required for localization to nuclear polycomb bodies; the sequence is HAARAEMEMY…HLQGNPILLA (75 aa). Residues 193 to 282 form a disordered region; it reads YQKPPESDTE…WDDGKGKPSE (90 aa). Residues 227 to 244 are compositionally biased toward basic and acidic residues; that stretch reads IKDPDIEVDNQQKPRVAD. The 55-residue stretch at 324 to 378 folds into the SAM domain; the sequence is WTVDDVYNFIRSLPGCSDYAQVFKDHAIDGETLPLLTEQHLRGTMGLKLGPALKI. The interval 425–445 is disordered; sequence SIPGPQDLLSPKRTEQDVMRN. Residues 434–445 show a composition bias toward basic and acidic residues; the sequence is SPKRTEQDVMRN.

As to quaternary structure, monomer, homodimer and homooligomer. Component of a Polycomb group (PcG) multiprotein PRC1-like complex. Interacts with PHC2 and NR2E3. Interacts with RNF1 in a PHC2-dependent manner. Interacts with SAMD11. In terms of tissue distribution, expressed in the retina and the pineal gland. In the retina, it is predominantly expressed in the outer nuclear layer and developing rod photoreceptors.

The protein localises to the nucleus. It localises to the cytoplasm. Functionally, component of a Polycomb group (PcG) multiprotein PRC1-like complex, essential for establishing rod photoreceptor cell identity and function by silencing nonrod gene expression in developing rod photoreceptor cells. Via its association with the PRC1-like complex, promotes epigenetic repressive marks H3K27me3 and H2AK119ub marks in nonrod genes, silencing their transcription. Represses Crx-controlled photoreceptor-specific gene expression. This is Sterile alpha motif domain-containing protein 7 (Samd7) from Mus musculus (Mouse).